The following is a 68-amino-acid chain: Small ribosomal subunit protein bS21 (68 aa).

Residues 37–49 (EKPSEKRAREKAA) are compositionally biased toward basic and acidic residues. Residues 37–68 (EKPSEKRAREKAAAVRRARKMERKRMERDGIK) are disordered. Over residues 50–59 (AVRRARKMER) the composition is skewed to basic residues.

This sequence belongs to the bacterial ribosomal protein bS21 family.

The sequence is that of Small ribosomal subunit protein bS21 from Erythrobacter litoralis (strain HTCC2594).